The primary structure comprises 354 residues: Photosystem II protein D1 1 (354 aa).

The next 3 membrane-spanning stretches (helical) occupy residues 29-46 (YIGWFGVLMIPTLLTATT), 118-133 (HFLIGVFCYMGREWEL), and 142-156 (WIAVAYSAPVAAATA). His118 lines the chlorophyll a pocket. Tyr126 provides a ligand contact to pheophytin a. [CaMn4O5] cluster contacts are provided by Asp170 and Glu189. A helical transmembrane segment spans residues 197 to 218 (FHQLGVAGVFGGALFSAMHGSL). His198 contributes to the chlorophyll a binding site. A quinone is bound by residues His215 and 264-265 (SF). A Fe cation-binding site is contributed by His215. His272 contributes to the Fe cation binding site. Residues 274–288 (FLAAWPVIGIWFTAL) traverse the membrane as a helical segment. His332, Glu333, Asp342, and Ala344 together coordinate [CaMn4O5] cluster. A propeptide spanning residues 345–354 (AVEVAPAIRG) is cleaved from the precursor.

It belongs to the reaction center PufL/M/PsbA/D family. In terms of assembly, PSII is composed of 1 copy each of membrane proteins PsbA, PsbB, PsbC, PsbD, PsbE, PsbF, PsbH, PsbI, PsbJ, PsbK, PsbL, PsbM, PsbT, PsbX, PsbY, PsbZ, Psb30/Ycf12, peripheral proteins PsbO, CyanoQ (PsbQ), PsbU, PsbV and a large number of cofactors. It forms dimeric complexes. The D1/D2 heterodimer binds P680, chlorophylls that are the primary electron donor of PSII, and subsequent electron acceptors. It shares a non-heme iron and each subunit binds pheophytin, quinone, additional chlorophylls, carotenoids and lipids. D1 provides most of the ligands for the Mn4-Ca-O5 cluster of the oxygen-evolving complex (OEC). There is also a Cl(-1) ion associated with D1 and D2, which is required for oxygen evolution. The PSII complex binds additional chlorophylls, carotenoids and specific lipids. is required as a cofactor. Post-translationally, tyr-161 forms a radical intermediate that is referred to as redox-active TyrZ, YZ or Y-Z. C-terminally processed by CtpA; processing is essential to allow assembly of the oxygen-evolving complex and thus photosynthetic growth.

The protein resides in the cellular thylakoid membrane. The catalysed reaction is 2 a plastoquinone + 4 hnu + 2 H2O = 2 a plastoquinol + O2. In terms of biological role, photosystem II (PSII) is a light-driven water:plastoquinone oxidoreductase that uses light energy to abstract electrons from H(2)O, generating O(2) and a proton gradient subsequently used for ATP formation. It consists of a core antenna complex that captures photons, and an electron transfer chain that converts photonic excitation into a charge separation. The D1/D2 (PsbA/PsbD) reaction center heterodimer binds P680, the primary electron donor of PSII as well as several subsequent electron acceptors. This is Photosystem II protein D1 1 from Synechococcus sp. (strain JA-3-3Ab) (Cyanobacteria bacterium Yellowstone A-Prime).